A 680-amino-acid polypeptide reads, in one-letter code: Chaperone protein dnaK3 (680 aa).

Thr-205 is subject to Phosphothreonine; by autocatalysis. Positions 640 to 680 (GRERRRDDDEDEWAEPPRTRRSRSYSQRADSAPWDDWDDDW) are disordered.

This sequence belongs to the heat shock protein 70 family.

Functionally, acts as a chaperone. In Thermosynechococcus vestitus (strain NIES-2133 / IAM M-273 / BP-1), this protein is Chaperone protein dnaK3 (dnaK3).